The primary structure comprises 1257 residues: Period circadian protein homolog 2 (1257 aa).

The segment at 1 to 60 is disordered; that stretch reads MNGYVDFSPSPTSPTKEPGAPQPTQAVLQEDVDMSSGSSGNENCSTGRDSQGSDCDDNGK. Positions 35–53 are enriched in polar residues; it reads SSGSSGNENCSTGRDSQGS. A Nuclear export signal 1 motif is present at residues 109 to 118; sequence LIRTLKELKV. One can recognise a PAS 1 domain in the interval 179–246; sequence ITSEYIVKNA…FHSYTTPYKL (68 aa). The LXXLL signature appears at 306–310; the sequence is LCCLL. Residues 319–385 form the PAS 2 domain; the sequence is YEAPRIPPEK…MLAIHKKILQ (67 aa). Residues 393–436 form the PAC domain; the sequence is YSPIRFRTRNGEYITLDTSWSSFINPWSRKISFIIGRHKVRVGP. Positions 460–469 match the Nuclear export signal 2 motif; the sequence is LTEQIHRLLM. 2 disordered regions span residues 471 to 565 and 617 to 638; these read PVPH…GASL and PSRKATVSPGLHSGEAARPSKV. Residues 478-482 form an important for protein stability region; the sequence is SGYGS. The segment covering 493–504 has biased composition (polar residues); it reads MSQTSSSDSNGQ. The CSNK1E binding domain stretch occupies residues 510 to 709; that stretch reads RRSGIFKTSG…GAAGGLSQEK (200 aa). Phosphoserine is present on residues Ser-525, Ser-528, Ser-531, Ser-538, and Ser-544. Thr-554 is subject to Phosphothreonine. Residues Ser-659, Ser-693, Ser-697, Ser-706, Ser-758, and Ser-763 each carry the phosphoserine modification. Residues 757–832 form a disordered region; the sequence is RSRAQASDRG…SDTSQSSCPS (76 aa). A Nuclear localization signal motif is present at residues 778-794; the sequence is KKTGKNRKLKSKRVKTR. Over residues 779-792 the composition is skewed to basic residues; sequence KTGKNRKLKSKRVK. The span at 821–832 shows a compositional bias: low complexity; that stretch reads SPSDTSQSSCPS. Thr-858 carries the post-translational modification Phosphothreonine. The interaction with PPARG stretch occupies residues 882–1067; the sequence is EFAVQPLPFA…DLCSATGSAL (186 aa). Position 939 is a phosphoserine (Ser-939). Thr-964 bears the Phosphothreonine mark. At Ser-971 the chain carries Phosphoserine. The Nuclear export signal 3 signature appears at 983 to 990; the sequence is LQLNLLQL. The disordered stretch occupies residues 994–1044; sequence PEGSTGAAGTLGTTGTAASGLDCTSGTSRDRQPKAPPTCNEPSDTQNSDAI. Low complexity predominate over residues 996–1014; sequence GSTGAAGTLGTTGTAASGL. Residues 1033-1044 show a composition bias toward polar residues; that stretch reads NEPSDTQNSDAI. An LXXLL motif is present at residues 1051-1055; sequence LNLLL. A compositionally biased stretch (low complexity) spans 1070–1092; that stretch reads SGASATSDSLGSSSLGFGTSQSG. The interval 1070-1115 is disordered; the sequence is SGASATSDSLGSSSLGFGTSQSGAGSSDTSHTSKYFGSIDSSENNH. Positions 1093 to 1111 are enriched in polar residues; it reads AGSSDTSHTSKYFGSIDSS. Position 1126 is a phosphoserine (Ser-1126). Residues 1157–1257 form a CRY binding domain region; it reads SRDLQAVLKE…LTGPRIEAQT (101 aa). Positions 1224 to 1257 are disordered; sequence PYEEDSPSPGLCDTSEAKEEEGEQLTGPRIEAQT.

As to quaternary structure, homodimer. Component of the circadian core oscillator, which includes the CRY proteins, CLOCK or NPAS2, BMAL1 or BMAL2, CSNK1D and/or CSNK1E, TIMELESS, and the PER proteins. Interacts with CLOCK-BMAL1 (off DNA). Interacts with BMAL2. Interacts directly with PER1 and PER3, and through a C-terminal domain, with CRY1 and CRY2. Interacts (via PAS 2 domain) with TIMELESS. Interacts with NFIL3. Different large complexes have been identified with different repressive functions. The core of PER complexes is composed of at least PER1, PER2, PER3, CRY1, CRY2, CSNK1D and/or CSNK1E. The large PER complex involved in the repression of transcriptional termination is composed of at least PER2, CDK9, DDX5, DHX9, NCBP1 and POLR2A (active). The large PER complex involved in the histone deacetylation is composed of at least HDAC1, PER2, SFPQ and SIN3A. The large PER complex involved in the histone methylation is composed of at least PER2, CBX3, TRIM28, SUV39H1 and/or SUV39H2; CBX3 mediates the formation of the complex. Interacts with SETX; the interaction inhibits termination of circadian target genes. Interacts with the nuclear receptors HNF4A, NR1D1, NR4A2, RORA, PPARA, PPARG and THRA; the interaction with at least PPARG is ligand dependent. Interacts with PML. Interacts (phosphorylated) with BTRC and FBXW11; the interactions trigger proteasomal degradation. Interacts with NONO and SFPQ. Interacts with CAVIN3. Interacts with MAGEL2. Interacts with MAP1LC3B. Interacts with HNF4A. Post-translationally, acetylated. Deacetylated by SIRT1, resulting in decreased protein stability. Deacetylated by SIRT6, preventing its degradation by the proteasome, resulting in increased protein stability. In terms of processing, phosphorylated by CSNK1E and CSNK1D. Phosphorylation results in PER2 protein degradation. May be dephosphorylated by PP1. Ubiquitinated, leading to its proteasomal degradation. Ubiquitination may be inhibited by CRY1. In the brain, high expression in SCN during the subjective day. Constitutive expression in the cornu ammonis and in the dentate gyrus of the hippocampus. Also expressed in the piriform cortex and the glomeruli of the olfactory bulb, and at a lower extent in the cerebral cortex. Not expressed in the pars tuberalis and the Purkinje neurons. Also expressed in adipose tissue (white and brown), heart, kidney, bladder, lumbar spinal cord, skeletal muscle, spleen, lung, pancreas and liver with highest levels in skeletal muscle and liver and lowest levels in spleen.

The protein resides in the nucleus. It is found in the cytoplasm. Its subcellular location is the perinuclear region. Functionally, transcriptional repressor which forms a core component of the circadian clock. The circadian clock, an internal time-keeping system, regulates various physiological processes through the generation of approximately 24 hour circadian rhythms in gene expression, which are translated into rhythms in metabolism and behavior. It is derived from the Latin roots 'circa' (about) and 'diem' (day) and acts as an important regulator of a wide array of physiological functions including metabolism, sleep, body temperature, blood pressure, endocrine, immune, cardiovascular, and renal function. Consists of two major components: the central clock, residing in the suprachiasmatic nucleus (SCN) of the brain, and the peripheral clocks that are present in nearly every tissue and organ system. Both the central and peripheral clocks can be reset by environmental cues, also known as Zeitgebers (German for 'timegivers'). The predominant Zeitgeber for the central clock is light, which is sensed by retina and signals directly to the SCN. The central clock entrains the peripheral clocks through neuronal and hormonal signals, body temperature and feeding-related cues, aligning all clocks with the external light/dark cycle. Circadian rhythms allow an organism to achieve temporal homeostasis with its environment at the molecular level by regulating gene expression to create a peak of protein expression once every 24 hours to control when a particular physiological process is most active with respect to the solar day. Transcription and translation of core clock components (CLOCK, NPAS2, BMAL1, BMAL2, PER1, PER2, PER3, CRY1 and CRY2) plays a critical role in rhythm generation, whereas delays imposed by post-translational modifications (PTMs) are important for determining the period (tau) of the rhythms (tau refers to the period of a rhythm and is the length, in time, of one complete cycle). A diurnal rhythm is synchronized with the day/night cycle, while the ultradian and infradian rhythms have a period shorter and longer than 24 hours, respectively. Disruptions in the circadian rhythms contribute to the pathology of cardiovascular diseases, cancer, metabolic syndrome and aging. A transcription/translation feedback loop (TTFL) forms the core of the molecular circadian clock mechanism. Transcription factors, CLOCK or NPAS2 and BMAL1 or BMAL2, form the positive limb of the feedback loop, act in the form of a heterodimer and activate the transcription of core clock genes and clock-controlled genes (involved in key metabolic processes), harboring E-box elements (5'-CACGTG-3') within their promoters. The core clock genes: PER1/2/3 and CRY1/2 which are transcriptional repressors form the negative limb of the feedback loop and interact with the CLOCK|NPAS2-BMAL1|BMAL2 heterodimer inhibiting its activity and thereby negatively regulating their own expression. This heterodimer also activates nuclear receptors NR1D1/2 and RORA/B/G, which form a second feedback loop and which activate and repress BMAL1 transcription, respectively. PER1 and PER2 proteins transport CRY1 and CRY2 into the nucleus with appropriate circadian timing, but also contribute directly to repression of clock-controlled target genes through interaction with several classes of RNA-binding proteins, helicases and others transcriptional repressors. PER appears to regulate circadian control of transcription by at least three different modes. First, interacts directly with the CLOCK-BMAL1 at the tail end of the nascent transcript peak to recruit complexes containing the SIN3-HDAC that remodel chromatin to repress transcription. Second, brings H3K9 methyltransferases such as SUV39H1 and SUV39H2 to the E-box elements of the circadian target genes, like PER2 itself or PER1. The recruitment of each repressive modifier to the DNA seems to be very precisely temporally orchestrated by the large PER complex, the deacetylases acting before than the methyltransferases. Additionally, large PER complexes are also recruited to the target genes 3' termination site through interactions with RNA-binding proteins and helicases that may play a role in transcription termination to regulate transcription independently of CLOCK-BMAL1 interactions. Recruitment of large PER complexes to the elongating polymerase at PER and CRY termination sites inhibited SETX action, impeding RNA polymerase II release and thereby repressing transcriptional reinitiation. May propagate clock information to metabolic pathways via the interaction with nuclear receptors. Coactivator of PPARA and corepressor of NR1D1, binds rhythmically at the promoter of nuclear receptors target genes like BMAL1 or G6PC1. Directly and specifically represses PPARG proadipogenic activity by blocking PPARG recruitment to target promoters and thereby transcriptional activation. Required for fatty acid and lipid metabolism, is involved as well in the regulation of circulating insulin levels. Plays an important role in the maintenance of cardiovascular functions through the regulation of NO and vasodilatatory prostaglandins production in aortas. Controls circadian glutamate uptake in synaptic vesicles through the regulation of VGLUT1 expression. May also be involved in the regulation of inflammatory processes. Represses the CLOCK-BMAL1 induced transcription of BHLHE40/DEC1 and ATF4. Negatively regulates the formation of the TIMELESS-CRY1 complex by competing with TIMELESS for binding to CRY1. The sequence is that of Period circadian protein homolog 2 (Per2) from Mus musculus (Mouse).